The chain runs to 532 residues: Intercellular adhesion molecule 1 (532 aa).

An N-terminal signal peptide occupies residues 1-27 (MAPSSPRPALPALLVLLGALFPGPGNA). Over 28 to 480 (QTSVSPPKVI…TVNVLSPRYE (453 aa)) the chain is Extracellular. Ig-like C2-type domains lie at 41–103 (GGSV…QSTA) and 128–193 (GKDL…LDLR). Disulfide bonds link cysteine 48–cysteine 92, cysteine 52–cysteine 96, and cysteine 135–cysteine 186. Asparagine 145 is a glycosylation site (N-linked (GlcNAc...) asparagine). The short motif at 152 to 154 (RGE) is the Cell attachment site; atypical element. N-linked (GlcNAc...) asparagine glycans are attached at residues asparagine 183, asparagine 202, asparagine 267, and asparagine 296. 2 consecutive Ig-like C2-type domains span residues 230 to 297 (DTQG…LGNQ) and 325 to 378 (GTEV…LEVA). A disulfide bond links cysteine 237 and cysteine 290. Cysteines 332 and 371 form a disulfide. N-linked (GlcNAc...) asparagine glycosylation is found at asparagine 385 and asparagine 406. Intrachain disulfides connect cysteine 403/cysteine 419, cysteine 419/cysteine 457, and cysteine 431/cysteine 457. Residues 412-464 (NSQQTPMCQASGNPLPELKCLKDGTFPLPVGESVTVTRDLEGTYLCRARSTQG) enclose the Ig-like C2-type 5 domain. A helical membrane pass occupies residues 481 to 503 (IVIITVVAAAVIMGTAGLSTYLY). The Cytoplasmic portion of the chain corresponds to 504-532 (NRQRKIRKYRLQQAQKGTPMKPNTQATPP). 2 positions are modified to phosphothreonine: threonine 521 and threonine 530.

This sequence belongs to the immunoglobulin superfamily. ICAM family. In terms of assembly, homodimer. Interacts with MUC1 and promotes cell aggregation in epithelial cells. Interacts with ARHGEF26/SGEF. Interacts (on T cell side) with CD81, CD247 and CD9 at immunological synapses between antigen-presenting cells and T cells. Monoubiquitinated, which is promoted by MARCH9 and leads to endocytosis.

The protein localises to the membrane. In terms of biological role, ICAM proteins are ligands for the leukocyte adhesion protein LFA-1 (integrin alpha-L/beta-2). During leukocyte trans-endothelial migration, ICAM1 engagement promotes the assembly of endothelial apical cups through ARHGEF26/SGEF and RHOG activation. This Pan troglodytes (Chimpanzee) protein is Intercellular adhesion molecule 1 (ICAM1).